The chain runs to 144 residues: uncharacterized protein (144 aa).

The stretch at 24–67 (KLKELYQRLNQGINVEEVLKETVEDYKEKMEKYILEVLEEIEKY) forms a coiled coil.

This is an uncharacterized protein from Aquifex aeolicus (strain VF5).